The sequence spans 1162 residues: Integrin alpha-L (1162 aa).

The first 23 residues, M1–S23, serve as a signal peptide directing secretion. The Extracellular portion of the chain corresponds to Y24–H1088. 2 FG-GAP repeats span residues T28–P79 and V80–L138. A disulfide bond links C70 and C77. N86 carries an N-linked (GlcNAc...) asparagine glycan. 2 cysteine pairs are disulfide-bonded: C108–C126 and C147–C199. Residues D153–L325 enclose the VWFA domain. N185 and N270 each carry an N-linked (GlcNAc...) asparagine glycan. FG-GAP repeat units follow at residues N336 to F387, Q390 to W443, N444 to M504, V505 to P561, and Q565 to E625. N444 is a glycosylation site (N-linked (GlcNAc...) asparagine). The Ca(2+) site is built by D466, D468, D470, E474, D528, N530, D532, D536, D588, D592, and D596. A disulfide bridge connects residues C651 and C705. N-linked (GlcNAc...) asparagine glycans are attached at residues N668, N696, N724, and N728. The cysteines at positions 768 and 774 are disulfide-linked. Residue N777 is glycosylated (N-linked (GlcNAc...) asparagine). A disulfide bridge links C841 with C857. N-linked (GlcNAc...) asparagine glycans are attached at residues N858, N881, N891, N900, and N928. Intrachain disulfides connect C994-C1010 and C1018-C1049. A glycan (N-linked (GlcNAc...) asparagine) is linked at N1057. The helical transmembrane segment at V1089–Y1109 threads the bilayer. Over K1110–D1162 the chain is Cytoplasmic. The GFFKR motif signature appears at G1112–R1116. The interval A1124–D1162 is disordered. Residues E1145–D1162 are compositionally biased toward basic and acidic residues.

Belongs to the integrin alpha chain family. Heterodimer of an alpha and a beta subunit. The ITGAL alpha subunit associates with the ITGB2 beta subunit. Interacts with THBD. Interacts with CD226. Post-translationally, in resting T-cells, up to 40% of surface ITGAL is constitutively phosphorylated. Phosphorylation causes conformational changes needed for ligand binding and is necessary for the activation by some physiological agents. In terms of tissue distribution, leukocytes.

It is found in the cell membrane. Integrin ITGAL/ITGB2 is a receptor for ICAM1, ICAM2, ICAM3 and ICAM4. Integrin ITGAL/ITGB2 is a receptor for F11R. Integrin ITGAL/ITGB2 is a receptor for the secreted form of ubiquitin-like protein ISG15; the interaction is mediated by ITGAL. Involved in a variety of immune phenomena including leukocyte-endothelial cell interaction, cytotoxic T-cell mediated killing, and antibody dependent killing by granulocytes and monocytes. Contributes to natural killer cell cytotoxicity. Involved in leukocyte adhesion and transmigration of leukocytes including T-cells and neutrophils. Acts as a platform at the immunological synapse to translate TCR engagement and density of the ITGAL ligand ICAM1 into graded adhesion. Required for generation of common lymphoid progenitor cells in bone marrow, indicating the role in lymphopoiesis. Integrin ITGAL/ITGB2 in association with ICAM3, contributes to apoptotic neutrophil phagocytosis by macrophages. The chain is Integrin alpha-L from Mus musculus (Mouse).